Consider the following 237-residue polypeptide: Ribosomal RNA small subunit methyltransferase G (237 aa).

Residues glycine 78, phenylalanine 83, 129–130 (AE), and arginine 148 each bind S-adenosyl-L-methionine.

It belongs to the methyltransferase superfamily. RNA methyltransferase RsmG family.

Its subcellular location is the cytoplasm. Its function is as follows. Specifically methylates the N7 position of a guanine in 16S rRNA. The chain is Ribosomal RNA small subunit methyltransferase G from Streptococcus pyogenes serotype M1.